The following is a 241-amino-acid chain: Acyl-protein thioesterase 1 (241 aa).

Active-site charge relay system residues include S122, D178, and H211.

This sequence belongs to the AB hydrolase superfamily. AB hydrolase 2 family.

The protein resides in the cytoplasm. Its subcellular location is the nucleus. The catalysed reaction is S-hexadecanoyl-L-cysteinyl-[protein] + H2O = L-cysteinyl-[protein] + hexadecanoate + H(+). Hydrolyzes fatty acids from S-acylated cysteine residues in proteins with a strong preference for palmitoylated G-alpha proteins over other acyl substrates. Mediates the deacylation of G-alpha proteins such as GPA1 in vivo, but has weak or no activity toward palmitoylated Ras proteins. Has weak lysophospholipase activity in vitro; however such activity may not exist in vivo. The protein is Acyl-protein thioesterase 1 of Aspergillus fumigatus (strain ATCC MYA-4609 / CBS 101355 / FGSC A1100 / Af293) (Neosartorya fumigata).